Consider the following 51-residue polypeptide: uncharacterized protein (51 aa).

This is an uncharacterized protein from Dictyostelium discoideum (Social amoeba).